The primary structure comprises 347 residues: Probable 3-hydroxyisobutyrate dehydrogenase, mitochondrial (347 aa).

A mitochondrion-targeting transit peptide spans 1-34 (MAIRRAQTLLCLSKFKTNFVSGSLHRFSSSSQNS). NAD(+) is bound by residues 38-67 (QNVGFIGLGNMGFRMVNNLIRAGYKVTVHD), 101-102 (LP), and threonine 134. Residue lysine 219 is part of the active site. Lysine 294 is an NAD(+) binding site.

Belongs to the HIBADH-related family. 3-hydroxyisobutyrate dehydrogenase subfamily.

Its subcellular location is the mitochondrion. The enzyme catalyses 3-hydroxy-2-methylpropanoate + NAD(+) = 2-methyl-3-oxopropanoate + NADH + H(+). Its pathway is amino-acid degradation; L-valine degradation. This chain is Probable 3-hydroxyisobutyrate dehydrogenase, mitochondrial, found in Arabidopsis thaliana (Mouse-ear cress).